A 121-amino-acid polypeptide reads, in one-letter code: Flagellar protein FliT (121 aa).

The segment at M1–L50 is required for homodimerization. The interval M60–V98 is fliD binding.

It belongs to the FliT family. In terms of assembly, homodimer. Interacts with FliD and FlhC.

The protein resides in the cytoplasm. It localises to the cytosol. Functionally, dual-function protein that regulates the transcription of class 2 flagellar operons and that also acts as an export chaperone for the filament-capping protein FliD. As a transcriptional regulator, acts as an anti-FlhDC factor; it directly binds FlhC, thus inhibiting the binding of the FlhC/FlhD complex to class 2 promoters, resulting in decreased expression of class 2 flagellar operons. As a chaperone, effects FliD transition to the membrane by preventing its premature polymerization, and by directing it to the export apparatus. This Escherichia coli O8 (strain IAI1) protein is Flagellar protein FliT.